A 269-amino-acid polypeptide reads, in one-letter code: Glutamate racemase (269 aa).

Substrate-binding positions include 7–8 and 39–40; these read DS and YG. C70 functions as the Proton donor/acceptor in the catalytic mechanism. 71–72 is a binding site for substrate; it reads NT. C194 acts as the Proton donor/acceptor in catalysis. 195 to 196 lines the substrate pocket; sequence TH.

Belongs to the aspartate/glutamate racemases family.

It catalyses the reaction L-glutamate = D-glutamate. It participates in cell wall biogenesis; peptidoglycan biosynthesis. In terms of biological role, provides the (R)-glutamate required for cell wall biosynthesis. The chain is Glutamate racemase from Roseobacter denitrificans (strain ATCC 33942 / OCh 114) (Erythrobacter sp. (strain OCh 114)).